A 588-amino-acid polypeptide reads, in one-letter code: Transmembrane protein 201 homolog (588 aa).

The Nuclear segment spans residues Met-1–Glu-212. A helical membrane pass occupies residues Ala-213–Leu-233. Over Gln-234–Glu-254 the chain is Perinuclear space. The helical transmembrane segment at Val-255–Phe-275 threads the bilayer. Over Asn-276–Arg-280 the chain is Nuclear. Residues Val-281–Thr-301 form a helical membrane-spanning segment. Topologically, residues Ser-302–Asp-309 are perinuclear space. The chain crosses the membrane as a helical span at residues Val-310–Leu-330. The Nuclear segment spans residues Leu-331–Gly-564. The disordered stretch occupies residues Arg-378–Pro-457. Low complexity predominate over residues Pro-384–Pro-396. Composition is skewed to polar residues over residues Asn-418–Val-430 and Met-441–Ser-452. Residues Ile-565–Phe-585 form a helical membrane-spanning segment. The Perinuclear space portion of the chain corresponds to Thr-586–Asn-588.

Belongs to the TMEM201 family.

Its subcellular location is the nucleus inner membrane. In terms of biological role, plays a role in nuclear migration in hypodermal cells. This Caenorhabditis elegans protein is Transmembrane protein 201 homolog.